The chain runs to 343 residues: Ribosome production factor 1 (343 aa).

Basic and acidic residues-rich tracts occupy residues 1–10 and 82–91; these read MAEKKGPEAK and EREALGDKAP. Disordered stretches follow at residues 1 to 51 and 77 to 97; these read MAEK…LSEI and KKRK…PVPK. In terms of domain architecture, Brix spans 136–319; it reads PKILITTSDR…LRSLQKGTFD (184 aa). Positions 297–314 are RNA-binding; that stretch reads VGIQELGPRFTLKLRSLQ.

The protein resides in the nucleus. It is found in the nucleolus. In terms of biological role, may be required for ribosome biogenesis. In Xenopus laevis (African clawed frog), this protein is Ribosome production factor 1 (rpf1).